Here is an 863-residue protein sequence, read N- to C-terminus: Chromatin assembly factor 1 subunit A (863 aa).

Disordered stretches follow at residues 1 to 353 (MVVV…EEKD), 423 to 466 (LNGL…PDRS), 513 to 579 (DSDE…RQRM), and 749 to 863 (VTRD…PATA). Positions 42-54 (LNPEPKECNEPKR) are enriched in basic and acidic residues. Residue T111 is modified to Phosphothreonine. S118 bears the Phosphoserine mark. Low complexity predominate over residues 144 to 154 (SEGTTEPTIPL). 2 stretches are compositionally biased toward acidic residues: residues 155–168 (TEEE…EDVD) and 177–196 (QDSD…EQQQ). The span at 205–237 (ESVLSTGSTSSASVIASSPEPSKSAPTTPASTS) shows a compositional bias: low complexity. 2 stretches are compositionally biased toward basic and acidic residues: residues 254–353 (QEQE…EEKD) and 457–466 (QKADDGPDRS). 2 stretches are compositionally biased toward acidic residues: residues 513-524 (DSDEEWEEEEPG) and 532-547 (GDDD…DDDG). Over residues 569–579 (DPEKQKVRQRM) the composition is skewed to basic and acidic residues. The span at 760–771 (NSPTTNSSTTPS) shows a compositional bias: low complexity. Positions 806–815 (DTEDDEDDDC) are enriched in acidic residues. Positions 821–835 (QSGSSEQDINTSLPQ) are enriched in polar residues. Positions 850–863 (TAALALPCPTPATA) are enriched in low complexity.

The protein belongs to the CHAF1A family.

It localises to the nucleus. Acts as a component of the histone chaperone complex chromatin assembly factor 1 (CAF-1), which assembles histone octamers onto DNA during replication and repair. CAF-1 performs the first step of the nucleosome assembly process, bringing newly synthesized histones H3 and H4 to replicating DNA; histones H2A/H2B can bind to this chromatin precursor subsequent to DNA replication to complete the histone octamer. This Danio rerio (Zebrafish) protein is Chromatin assembly factor 1 subunit A (chaf1a).